The following is a 1187-amino-acid chain: Phospholipid-transporting ATPase IH (1187 aa).

Residues 1 to 61 (MDCSLLRTLV…SSKYTFWNFI (61 aa)) lie on the Cytoplasmic side of the membrane. Residues 62-82 (PKNLFEQFRRIANFYFLIIFL) form a helical membrane-spanning segment. Topologically, residues 83–88 (VQLIID) are extracellular. The chain crosses the membrane as a helical span at residues 89-110 (TPTSPVTSGLPLFFVITVTAIK). Topologically, residues 111–296 (QGYEDWLRHK…SAVEKSMNTF (186 aa)) are cytoplasmic. Residues 297-318 (LIVYLCILVSKALINTVLKYVW) traverse the membrane as a helical segment. At 319–349 (QSEPFRDEPWYNEKTESERQRNLFLRAFTDF) the chain is on the extracellular side. The chain crosses the membrane as a helical span at residues 350–372 (LAFMVLFNYIIPVSMYVTVEMQK). Residues 373–884 (FLGSYFITWD…GHFYYIRISE (512 aa)) lie on the Cytoplasmic side of the membrane. The 4-aspartylphosphate intermediate role is filled by D414. The ATP site is built by D414, K415, T416, E513, F555, K578, R609, T689, G690, and D691. Residue D414 participates in Mg(2+) binding. T416 is a Mg(2+) binding site. S740 is modified (phosphoserine). The ATP site is built by R801 and K807. D828 provides a ligand contact to Mg(2+). Residues N831 and D832 each contribute to the ATP site. D832 contacts Mg(2+). A helical transmembrane segment spans residues 885–905 (LVQYFFYKNVCFIFPQFLYQF). The Extracellular portion of the chain corresponds to 906–917 (FCGFSQQTLYDT). The chain crosses the membrane as a helical span at residues 918–937 (AYLTLYNISFTSLPILLYSL). The Cytoplasmic segment spans residues 938–967 (MEQHVGIDVLKRDPTLYRDIAKNALLRWRV). The helical transmembrane segment at 968 to 989 (FIYWTFLGVFDALVFFFGAYFI) threads the bilayer. At 990–1003 (FENTTVTINGQMFG) the chain is on the extracellular side. Residues 1004–1026 (NWTFGTLVFTVMVLTVTLKLALD) traverse the membrane as a helical segment. Residues 1027-1032 (THYWTW) lie on the Cytoplasmic side of the membrane. Residues 1033–1053 (INHFVIWGSLLFYIAFSLLWG) traverse the membrane as a helical segment. Topologically, residues 1054–1071 (GVIWPFLSYQRMYYVFIS) are extracellular. Residues 1072-1096 (MLSSGPAWLGIILLVTVGLLPDVLK) form a helical membrane-spanning segment. The Cytoplasmic portion of the chain corresponds to 1097-1138 (KVLCRQLWPTATERTQNIQHQDSISEFTPLASLPSWGAQGSR). Phosphoserine occurs at positions 1148 and 1158.

It belongs to the cation transport ATPase (P-type) (TC 3.A.3) family. Type IV subfamily. Component of a P4-ATPase flippase complex which consists of a catalytic alpha subunit ATP11A and an accessory beta subunit TMEM30A. It depends on Mg(2+) as a cofactor. Post-translationally, proteolytically cleaved by CASP3. In terms of tissue distribution, widely expressed. Expressed in myoblasts. Expressed in retina, brain, liver, testes and kidney (at protein level). Expressed in the inner ear.

Its subcellular location is the cell membrane. The protein resides in the early endosome. The protein localises to the recycling endosome. It localises to the endoplasmic reticulum membrane. It carries out the reaction ATP + H2O + phospholipidSide 1 = ADP + phosphate + phospholipidSide 2.. The catalysed reaction is a 1,2-diacyl-sn-glycero-3-phospho-L-serine(out) + ATP + H2O = a 1,2-diacyl-sn-glycero-3-phospho-L-serine(in) + ADP + phosphate + H(+). The enzyme catalyses a 1,2-diacyl-sn-glycero-3-phosphoethanolamine(out) + ATP + H2O = a 1,2-diacyl-sn-glycero-3-phosphoethanolamine(in) + ADP + phosphate + H(+). Functionally, catalytic component of a P4-ATPase flippase complex which catalyzes the hydrolysis of ATP coupled to the transport of aminophospholipids, phosphatidylserines (PS) and phosphatidylethanolamines (PE), from the outer to the inner leaflet of the plasma membrane. Does not show flippase activity toward phosphatidylcholine (PC). Contributes to the maintenance of membrane lipid asymmetry with a specific role in morphogenesis of muscle cells. In myoblasts, mediates PS enrichment at the inner leaflet of plasma membrane, triggering PIEZO1-dependent Ca2+ influx and Rho GTPases signal transduction, subsequently leading to the assembly of cortical actomyosin fibers and myotube formation. The sequence is that of Phospholipid-transporting ATPase IH (Atp11a) from Mus musculus (Mouse).